The sequence spans 310 residues: ADP-L-glycero-D-manno-heptose-6-epimerase (310 aa).

Residues 10 to 11 (FI), 31 to 32 (DN), Lys38, Lys53, 75 to 79 (EGACS), and Asn92 contribute to the NADP(+) site. Tyr140 acts as the Proton acceptor in catalysis. Residue Lys144 coordinates NADP(+). Asn169 is a substrate binding site. NADP(+) contacts are provided by Val170 and Lys178. Lys178 serves as the catalytic Proton acceptor. Residues Ser180, His187, 201-204 (FEGS), and Arg209 contribute to the substrate site. Lys267 is modified (N6-acetyllysine). Residue Tyr272 participates in substrate binding.

The protein belongs to the NAD(P)-dependent epimerase/dehydratase family. HldD subfamily. As to quaternary structure, homopentamer. NADP(+) is required as a cofactor.

The enzyme catalyses ADP-D-glycero-beta-D-manno-heptose = ADP-L-glycero-beta-D-manno-heptose. The protein operates within nucleotide-sugar biosynthesis; ADP-L-glycero-beta-D-manno-heptose biosynthesis; ADP-L-glycero-beta-D-manno-heptose from D-glycero-beta-D-manno-heptose 7-phosphate: step 4/4. Its function is as follows. Catalyzes the interconversion between ADP-D-glycero-beta-D-manno-heptose and ADP-L-glycero-beta-D-manno-heptose via an epimerization at carbon 6 of the heptose. The sequence is that of ADP-L-glycero-D-manno-heptose-6-epimerase from Escherichia coli (strain ATCC 8739 / DSM 1576 / NBRC 3972 / NCIMB 8545 / WDCM 00012 / Crooks).